Here is a 298-residue protein sequence, read N- to C-terminus: Cytochrome c oxidase subunit 2 (298 aa).

The N-terminal stretch at 1 to 29 (MMAIATKRRGVAAVMSLGVATMTAVPALA) is a signal peptide. At Gln-30 the chain carries Pyrrolidone carboxylic acid. The Periplasmic segment spans residues 30–55 (QDVLGDLPVIGKPVNGGMNFQPASSP). A helical transmembrane segment spans residues 56–88 (LAHDQQWLDHFVLYIITAVTIFVCLLLLICIVR). The Cytoplasmic portion of the chain corresponds to 89 to 103 (FNRRANPVPARFTHN). The helical transmembrane segment at 104–134 (TPIEVIWTLVPVLILVAIGAFSLPILFRSQE) threads the bilayer. Residues 135 to 280 (MPNDPDLVIK…WLAGAKEEFA (146 aa)) lie on the Periplasmic side of the membrane. Cu cation contacts are provided by His-210, Cys-245, Glu-247, Cys-249, His-253, and Met-256. Residues 281–298 (ADASDYLPASPVKLASAE) constitute a propeptide, C-terminal propeptide.

The protein belongs to the cytochrome c oxidase subunit 2 family. The cofactor is binuclear copper center (CuA).

It is found in the cell inner membrane. The enzyme catalyses 4 Fe(II)-[cytochrome c] + O2 + 8 H(+)(in) = 4 Fe(III)-[cytochrome c] + 2 H2O + 4 H(+)(out). Subunits I and II form the functional core of the enzyme complex. Electrons originating in cytochrome c are transferred via heme a and Cu(A) to the binuclear center formed by heme a3 and Cu(B). This is Cytochrome c oxidase subunit 2 (ctaC) from Paracoccus denitrificans.